A 434-amino-acid chain; its full sequence is Glycerol-3-phosphate acyltransferase 3 (434 aa).

The chain crosses the membrane as a helical span at residues 14-34 (WLTLVLGFILLPSVFGVSLGI). Phosphoserine is present on residues serine 68 and serine 77. A run of 2 helical transmembrane segments spans residues 137–157 (ISLR…CVLL) and 161–181 (VTLA…VGQL). The HXXXXD motif signature appears at 229-234 (HTSPID).

The protein belongs to the 1-acyl-sn-glycerol-3-phosphate acyltransferase family. Widely expressed. Expressed in liver, kidney, testis, brain, heart, skeletal muscle, thyroid, prostate, thymus and placenta. Also expressed lung and adipose tissue.

The protein resides in the endoplasmic reticulum membrane. It catalyses the reaction sn-glycerol 3-phosphate + an acyl-CoA = a 1-acyl-sn-glycero-3-phosphate + CoA. The catalysed reaction is a 1-acyl-sn-glycero-3-phosphate + an acyl-CoA = a 1,2-diacyl-sn-glycero-3-phosphate + CoA. It carries out the reaction dodecanoyl-CoA + sn-glycerol 3-phosphate = 1-dodecanoyl-sn-glycerol 3-phosphate + CoA. The enzyme catalyses sn-glycerol 3-phosphate + hexadecanoyl-CoA = 1-hexadecanoyl-sn-glycero-3-phosphate + CoA. It catalyses the reaction sn-glycerol 3-phosphate + (9Z)-octadecenoyl-CoA = 1-(9Z-octadecenoyl)-sn-glycero-3-phosphate + CoA. The catalysed reaction is (9Z,12Z)-octadecadienoyl-CoA + sn-glycerol 3-phosphate = 1-(9Z,12Z)-octadecadienoyl-sn-glycero-3-phosphate + CoA. It carries out the reaction 1-tetradecanoyl-sn-glycerol 3-phosphate + (9Z)-octadecenoyl-CoA = 1-tetradecanoyl-2-(9Z)-octadecenoyl-sn-glycero-3-phosphate + CoA. The enzyme catalyses 1-hexadecanoyl-sn-glycero-3-phosphate + (9Z)-octadecenoyl-CoA = 1-hexadecanoyl-2-(9Z-octadecenoyl)-sn-glycero-3-phosphate + CoA. It catalyses the reaction 1-(9Z-octadecenoyl)-sn-glycero-3-phosphate + (9Z)-octadecenoyl-CoA = 1,2-di-(9Z-octadecenoyl)-sn-glycero-3-phosphate + CoA. The catalysed reaction is 1-(6Z,9Z,12Z-octadecatrienoyl)-sn-glycero-3-phosphate + (9Z)-octadecenoyl-CoA = (6Z,9Z,12Z)-octadecatrienoyl-2-(9Z)-octadecenoyl-sn-glycero-3-phosphate + CoA. It carries out the reaction 1-(9Z,12Z,15Z)-octadecatrienoyl-sn-glycero-3-phosphate + (9Z)-octadecenoyl-CoA = 1-(9Z,12Z,15Z)-octadecatrienoyl-2-(9Z)-octadecenoyl-sn-glycero-3-phosphate + CoA. The enzyme catalyses 1-(9Z-octadecenoyl)-sn-glycero-3-phosphate + tetradecanoyl-CoA = 1-(9Z)-octadecenoyl-2-tetradecanoyl-sn-glycero-3-phosphate + CoA. It catalyses the reaction 1-(9Z-octadecenoyl)-sn-glycero-3-phosphate + hexadecanoyl-CoA = 1-(9Z)-octadecenoyl-2-hexadecanoyl-sn-glycero-3-phosphate + CoA. The catalysed reaction is 1-(9Z-octadecenoyl)-sn-glycero-3-phosphate + octadecanoyl-CoA = 1-(9Z-octadecenoyl)-2-octadecanoyl-sn-glycero-3-phosphate + CoA. It carries out the reaction 1-(9Z-octadecenoyl)-sn-glycero-3-phosphate + (9Z,12Z)-octadecadienoyl-CoA = 1-(9Z)-octadecenoyl-2-(9Z,12Z)-octadecadienoyl-sn-glycero-3-phosphate + CoA. The enzyme catalyses 1-(5Z,8Z,11Z,14Z-eicosatetraenoyl)-sn-glycero-3-phosphate + (9Z)-octadecenoyl-CoA = 1-(5Z,8Z,11Z,14Z)-eicosatetraenoyl-2-(9Z)-octadecenoyl-sn-glycero-3-phosphate + CoA. It functions in the pathway glycerolipid metabolism; triacylglycerol biosynthesis. Its pathway is phospholipid metabolism; CDP-diacylglycerol biosynthesis; CDP-diacylglycerol from sn-glycerol 3-phosphate: step 1/3. Inhibited by N-ethylmaleimide (NEM). In terms of biological role, converts glycerol-3-phosphate to 1-acyl-sn-glycerol-3-phosphate (lysophosphatidic acid or LPA) by incorporating an acyl moiety at the sn-1 position of the glycerol backbone. Also converts LPA into 1,2-diacyl-sn-glycerol-3-phosphate (phosphatidic acid or PA) by incorporating an acyl moiety at the sn-2 position of the glycerol backbone. Protects cells against lipotoxicity. The polypeptide is Glycerol-3-phosphate acyltransferase 3 (Homo sapiens (Human)).